We begin with the raw amino-acid sequence, 538 residues long: Carboxypeptidase 2 (538 aa).

A signal peptide spans 1–21 (MVAYRFLTLISLGLGSHCASA). Asn46 carries N-linked (GlcNAc...) asparagine glycosylation. A disordered region spans residues 53–76 (PAFTSPGTVPRGFSDGTSGPTRDE). The Peptidase M14 domain occupies 71–351 (GPTRDETMEG…VMVKSILQTA (281 aa)). Positions 136, 139, and 224 each coordinate Zn(2+). Catalysis depends on Glu322, which acts as the Proton donor/acceptor. N-linked (GlcNAc...) asparagine glycosylation is found at Asn393 and Asn459.

It belongs to the peptidase M14 family. Zn(2+) serves as cofactor.

The protein localises to the secreted. Functionally, extracellular metalloprotease that contributes to pathogenicity. This Trichophyton tonsurans (Scalp ringworm fungus) protein is Carboxypeptidase 2 (MCPB).